Consider the following 614-residue polypeptide: MNSPGGRGKKKGSGGPSSPVPPRPPPPCQARSRPAPKPAPPPQSPHKRNLYYFSYPLFLGFALLRLVAFHLGLLFVWLCQRFSRALMAAKRSSGAAPASASPPAPVPGGEAERVRAFHKQAFEYISVALRIDEDEKVGQKDQAVEWYKKGIEELEKGIAVVVTGQGEQCERARRLQAKMMTNLVMAKDRLQLLEKLQPSLQFSKSQTDVYNDSTNLTCRNGHLQSESGAVPKRKDPLTHASNSLPRSKTVMKTGPTGLSGHHRAPSCSGLSMVSGVRQGPGSAAATHKSTPKTNRTNKPSTPTTAARKKKDLKNFRNVDSNLANLIMNEIVDNGTAVKFDDIAGQELAKQALQEIVILPSLRPELFTGLRAPARGLLLFGPPGNGKTMLAKAVAAESNATFFNISAASLTSKYVGEGEKLVRALFAVARELQPSIIFIDEVDSLLCERREGEHDASRRLKTEFLIEFDGVQSAGDDRVLVMGATNRPQELDEAVLRRFTKRVYVSLPNEETRLLLLKNLLCKQGSPLTQKELAQLARMTNGYSGSDLTALAKDAALGPIRELKPEQVKNMSASEMRNIRLSDFTESLKKIKRSVSPQTLEAYIRWNKDFGDTTV.

Residues 1-45 form a disordered region; sequence MNSPGGRGKKKGSGGPSSPVPPRPPPPCQARSRPAPKPAPPPQSP. Positions 1-50 are required for nuclear localization; sequence MNSPGGRGKKKGSGGPSSPVPPRPPPPCQARSRPAPKPAPPPQSPHKRNL. Residues 1–56 lie on the Cytoplasmic side of the membrane; it reads MNSPGGRGKKKGSGGPSSPVPPRPPPPCQARSRPAPKPAPPPQSPHKRNLYYFSYP. The tract at residues 1 to 80 is required for interaction with ATL1; the sequence is MNSPGGRGKK…LGLLFVWLCQ (80 aa). Residues 1–192 are required for midbody localization; the sequence is MNSPGGRGKK…LVMAKDRLQL (192 aa). The tract at residues 1–298 is required for interaction with RTN1; the sequence is MNSPGGRGKK…STPKTNRTNK (298 aa). Residues 4–11 carry the Nuclear localization signal motif; that stretch reads PGGRGKKK. Composition is skewed to pro residues over residues 18–28 and 35–44; these read SPVPPRPPPPC and APKPAPPPQS. A required for interaction with SSNA1 and microtubules region spans residues 50–87; sequence LYYFSYPLFLGFALLRLVAFHLGLLFVWLCQRFSRALM. Residues 57–77 constitute an intramembrane region (helical); it reads LFLGFALLRLVAFHLGLLFVW. The Nuclear export signal motif lies at 59 to 67; that stretch reads LGFALLRLV. Residues 78 to 614 lie on the Cytoplasmic side of the membrane; it reads LCQRFSRALM…WNKDFGDTTV (537 aa). A sufficient for interaction with CHMP1B region spans residues 110-194; it reads EAERVRAFHK…MAKDRLQLLE (85 aa). Residues 112 to 198 are required for interaction with microtubules; it reads ERVRAFHKQA…RLQLLEKLQP (87 aa). Positions 118–193 constitute an MIT domain; sequence HKQAFEYISV…VMAKDRLQLL (76 aa). Residues 220–310 form a disordered region; the sequence is NGHLQSESGA…TPTTAARKKK (91 aa). The sufficient for microtubule severing stretch occupies residues 226 to 614; sequence ESGAVPKRKD…WNKDFGDTTV (389 aa). Ser243 and Ser266 each carry phosphoserine. The tract at residues 268 to 326 is required for interaction with microtubules and microtubule severing; that stretch reads SGLSMVSGVRQGPGSAAATHKSTPKTNRTNKPSTPTTAARKKKDLKNFRNVDSNLANLI. A compositionally biased stretch (polar residues) spans 287-304; the sequence is HKSTPKTNRTNKPSTPTT. Position 304 is a phosphothreonine (Thr304). The short motif at 307 to 310 is the Nuclear localization signal element; that stretch reads RKKK. 380-387 serves as a coordination point for ATP; sequence GPPGNGKT. Position 595 is a phosphoserine (Ser595).

The protein belongs to the AAA ATPase family. Spastin subfamily. As to quaternary structure, homohexamer. Mostly monomeric, but assembles into hexameric structure for short periods of time. Oligomerization seems to be a prerequisite for catalytic activity. Binding to ATP in a cleft between two adjacent subunits stabilizes the homohexameric form. Binds to microtubules at least in part via the alpha-tubulin and beta-tubulin tails. The hexamer adopts a ring conformation through which microtubules pass prior to being severed. Does not interact strongly with tubulin heterodimers. Interacts (via MIT domain) with CHMP1B; the interaction is direct. Interacts with SSNA1. Interacts with ATL1. Interacts with RTN1. Interacts with ZFYVE27. Interacts with REEP1. Interacts (via MIT domain) with IST1.

It localises to the membrane. The protein localises to the endoplasmic reticulum. The protein resides in the midbody. It is found in the cytoplasm. Its subcellular location is the cytoskeleton. It localises to the microtubule organizing center. The protein localises to the centrosome. The protein resides in the perinuclear region. It is found in the nucleus. Its subcellular location is the spindle. It localises to the cell projection. The protein localises to the axon. It carries out the reaction n ATP + n H2O + a microtubule = n ADP + n phosphate + (n+1) alpha/beta tubulin heterodimers.. Its activity is regulated as follows. Allosteric enzyme with a cooperative mechanism; at least two neighbor subunits influence each other strongly in spastin hexamers. Microtubule binding promotes cooperative interactions among spastin subunits. Functionally, ATP-dependent microtubule severing protein that specifically recognizes and cuts microtubules that are polyglutamylated. Preferentially recognizes and acts on microtubules decorated with short polyglutamate tails: severing activity increases as the number of glutamates per tubulin rises from one to eight, but decreases beyond this glutamylation threshold. Severing activity is not dependent on tubulin acetylation or detyrosination. Microtubule severing promotes reorganization of cellular microtubule arrays and the release of microtubules from the centrosome following nucleation. It is critical for the biogenesis and maintenance of complex microtubule arrays in axons, spindles and cilia. SPAST is involved in abscission step of cytokinesis and nuclear envelope reassembly during anaphase in cooperation with the ESCRT-III complex. Recruited at the midbody, probably by IST1, and participates in membrane fission during abscission together with the ESCRT-III complex. Recruited to the nuclear membrane by IST1 and mediates microtubule severing, promoting nuclear envelope sealing and mitotic spindle disassembly during late anaphase. Required for membrane traffic from the endoplasmic reticulum (ER) to the Golgi and endosome recycling. Recruited by IST1 to endosomes and regulates early endosomal tubulation and recycling by mediating microtubule severing. Probably plays a role in axon growth and the formation of axonal branches. The protein is Spastin of Bos taurus (Bovine).